We begin with the raw amino-acid sequence, 503 residues long: Maturase K (503 aa).

It belongs to the intron maturase 2 family. MatK subfamily.

It localises to the plastid. It is found in the chloroplast. Its function is as follows. Usually encoded in the trnK tRNA gene intron. Probably assists in splicing its own and other chloroplast group II introns. In Callistemon polandii (Gold-tipped bottlebrush), this protein is Maturase K.